Consider the following 259-residue polypeptide: uncharacterized protein (259 aa).

It belongs to the BtpA family.

This is an uncharacterized protein from Pyrococcus horikoshii (strain ATCC 700860 / DSM 12428 / JCM 9974 / NBRC 100139 / OT-3).